We begin with the raw amino-acid sequence, 304 residues long: Small ribosomal subunit biogenesis GTPase RsgA (304 aa).

The 160-residue stretch at H70–L229 folds into the CP-type G domain. Residues T119–D122 and G172–T180 contribute to the GTP site. Zn(2+) is bound by residues C253, C259, H261, and C267.

It belongs to the TRAFAC class YlqF/YawG GTPase family. RsgA subfamily. In terms of assembly, monomer. Associates with 30S ribosomal subunit, binds 16S rRNA. It depends on Zn(2+) as a cofactor.

The protein resides in the cytoplasm. Its function is as follows. One of several proteins that assist in the late maturation steps of the functional core of the 30S ribosomal subunit. Helps release RbfA from mature subunits. May play a role in the assembly of ribosomal proteins into the subunit. Circularly permuted GTPase that catalyzes slow GTP hydrolysis, GTPase activity is stimulated by the 30S ribosomal subunit. The protein is Small ribosomal subunit biogenesis GTPase RsgA of Phytoplasma mali (strain AT).